We begin with the raw amino-acid sequence, 184 residues long: UPF0302 protein OB1778 (184 aa).

It belongs to the UPF0302 family.

The chain is UPF0302 protein OB1778 from Oceanobacillus iheyensis (strain DSM 14371 / CIP 107618 / JCM 11309 / KCTC 3954 / HTE831).